The chain runs to 468 residues: Phosphoglucosamine mutase (468 aa).

Ser112 acts as the Phosphoserine intermediate in catalysis. 4 residues coordinate Mg(2+): Ser112, Asp254, Asp256, and Asp258. The residue at position 112 (Ser112) is a Phosphoserine.

It belongs to the phosphohexose mutase family. Mg(2+) serves as cofactor. In terms of processing, activated by phosphorylation.

It catalyses the reaction alpha-D-glucosamine 1-phosphate = D-glucosamine 6-phosphate. Catalyzes the conversion of glucosamine-6-phosphate to glucosamine-1-phosphate. The polypeptide is Phosphoglucosamine mutase (Prochlorococcus marinus (strain MIT 9313)).